The following is a 213-amino-acid chain: Uridine kinase (213 aa).

Residue 15–22 coordinates ATP; the sequence is GASASGKS.

The protein belongs to the uridine kinase family.

It localises to the cytoplasm. It carries out the reaction uridine + ATP = UMP + ADP + H(+). The catalysed reaction is cytidine + ATP = CMP + ADP + H(+). The protein operates within pyrimidine metabolism; CTP biosynthesis via salvage pathway; CTP from cytidine: step 1/3. It participates in pyrimidine metabolism; UMP biosynthesis via salvage pathway; UMP from uridine: step 1/1. The chain is Uridine kinase from Salmonella paratyphi A (strain ATCC 9150 / SARB42).